Consider the following 270-residue polypeptide: Interleukin-1 beta (270 aa).

A propeptide spanning residues 1–118 (MATVPEPTSE…VYDDDAFVCD (118 aa)) is cleaved from the precursor.

The protein belongs to the IL-1 family. In terms of assembly, monomer. In its precursor form, weakly interacts with full-length MEFV; the mature cytokine does not interact at all. Interacts with integrins ITGAV:ITGBV and ITGA5:ITGB1; integrin-binding is required for IL1B signaling. Interacts with cargo receptor TMED10; the interaction is direct and is required for the secretion of IL1B mature form. Interacts with HSP90AB1; the interaction facilitates cargo translocation into the ERGIC. Interacts with HSP90B1; the interaction facilitates cargo translocation into the ERGIC.

The protein localises to the cytoplasm. The protein resides in the cytosol. It localises to the secreted. It is found in the lysosome. Its subcellular location is the extracellular exosome. In terms of biological role, potent pro-inflammatory cytokine. Initially discovered as the major endogenous pyrogen, induces prostaglandin synthesis, neutrophil influx and activation, T-cell activation and cytokine production, B-cell activation and antibody production, and fibroblast proliferation and collagen production. Promotes Th17 differentiation of T-cells. Synergizes with IL12/interleukin-12 to induce IFNG synthesis from T-helper 1 (Th1) cells. Plays a role in angiogenesis by inducing VEGF production synergistically with TNF and IL6. Involved in transduction of inflammation downstream of pyroptosis: its mature form is specifically released in the extracellular milieu by passing through the gasdermin-D (GSDMD) pore. This chain is Interleukin-1 beta (IL1B), found in Eumetopias jubatus (Steller sea lion).